Reading from the N-terminus, the 96-residue chain is Large ribosomal subunit protein bL28 (96 aa).

Belongs to the bacterial ribosomal protein bL28 family.

This Leptospira biflexa serovar Patoc (strain Patoc 1 / Ames) protein is Large ribosomal subunit protein bL28.